Consider the following 359-residue polypeptide: Phospho-N-acetylmuramoyl-pentapeptide-transferase (359 aa).

Transmembrane regions (helical) follow at residues 3-23 (QILF…PVLI), 53-73 (GGVA…LIGI), 84-104 (GLLV…DDFI), 117-137 (TAKL…ALQF), 156-176 (IATV…LVSA), 187-207 (LDGL…IITF), 231-251 (LALI…WNAA), 255-275 (IFMG…LSIT), 283-303 (VVIG…VAVF), and 330-350 (VIIR…ALFY).

It belongs to the glycosyltransferase 4 family. MraY subfamily. Requires Mg(2+) as cofactor.

The protein localises to the cell membrane. It catalyses the reaction UDP-N-acetyl-alpha-D-muramoyl-L-alanyl-gamma-D-glutamyl-meso-2,6-diaminopimeloyl-D-alanyl-D-alanine + di-trans,octa-cis-undecaprenyl phosphate = di-trans,octa-cis-undecaprenyl diphospho-N-acetyl-alpha-D-muramoyl-L-alanyl-D-glutamyl-meso-2,6-diaminopimeloyl-D-alanyl-D-alanine + UMP. Its pathway is cell wall biogenesis; peptidoglycan biosynthesis. Functionally, catalyzes the initial step of the lipid cycle reactions in the biosynthesis of the cell wall peptidoglycan: transfers peptidoglycan precursor phospho-MurNAc-pentapeptide from UDP-MurNAc-pentapeptide onto the lipid carrier undecaprenyl phosphate, yielding undecaprenyl-pyrophosphoryl-MurNAc-pentapeptide, known as lipid I. The protein is Phospho-N-acetylmuramoyl-pentapeptide-transferase of Rhodococcus opacus (strain B4).